Consider the following 393-residue polypeptide: Yellow-related salivary protein SP03B (393 aa).

An N-terminal signal peptide occupies residues 1-18 (MKIFLCLIAVVFLQGVVG). An N-linked (GlcNAc...) asparagine glycan is attached at Asn29.

The protein belongs to the major royal jelly protein family. As to expression, female salivary gland (at protein level).

The protein resides in the secreted. Its function is as follows. Probably modulates blood feeding of sand flies on vertebrate species by binding and sequestering different mediators involved in the host response. Binds biogenic amines. Binds serotonin with high affinity. Poorly binds histamine. Does not bind dopamine, noradrenaline, adrenaline and octopamine. In Phlebotomus perniciosus (Phlebotomine sand fly), this protein is Yellow-related salivary protein SP03B.